Reading from the N-terminus, the 54-residue chain is Large ribosomal subunit protein bL33 (54 aa).

It belongs to the bacterial ribosomal protein bL33 family.

The polypeptide is Large ribosomal subunit protein bL33 (Symbiobacterium thermophilum (strain DSM 24528 / JCM 14929 / IAM 14863 / T)).